Consider the following 490-residue polypeptide: Thiamine biosynthesis bifunctional protein ThiED (490 aa).

The segment at 1 to 213 is thiamine-phosphate synthase; the sequence is MASNGHTLRL…PDPALAATEI (213 aa). Residues 50 to 54 and N82 contribute to the 4-amino-2-methyl-5-(diphosphooxymethyl)pyrimidine site; that span reads QYRNK. Mg(2+) contacts are provided by D83 and D102. S121 is a binding site for 4-amino-2-methyl-5-(diphosphooxymethyl)pyrimidine. 147 to 149 contacts 2-[(2R,5Z)-2-carboxy-4-methylthiazol-5(2H)-ylidene]ethyl phosphate; sequence SRS. Position 150 (K150) interacts with 4-amino-2-methyl-5-(diphosphooxymethyl)pyrimidine. Residues G177 and 197–198 each bind 2-[(2R,5Z)-2-carboxy-4-methylthiazol-5(2H)-ylidene]ethyl phosphate; that span reads IS. The hydroxymethylpyrimidine/phosphomethylpyrimidine kinase stretch occupies residues 229–490; the sequence is LTVAGSDSGG…ILAAEDVRDR (262 aa). Q266 serves as a coordination point for 4-amino-5-hydroxymethyl-2-methylpyrimidine.

This sequence in the N-terminal section; belongs to the thiamine-phosphate synthase family. In the C-terminal section; belongs to the ThiD family. Mg(2+) is required as a cofactor.

It catalyses the reaction 2-[(2R,5Z)-2-carboxy-4-methylthiazol-5(2H)-ylidene]ethyl phosphate + 4-amino-2-methyl-5-(diphosphooxymethyl)pyrimidine + 2 H(+) = thiamine phosphate + CO2 + diphosphate. The catalysed reaction is 2-(2-carboxy-4-methylthiazol-5-yl)ethyl phosphate + 4-amino-2-methyl-5-(diphosphooxymethyl)pyrimidine + 2 H(+) = thiamine phosphate + CO2 + diphosphate. The enzyme catalyses 4-methyl-5-(2-phosphooxyethyl)-thiazole + 4-amino-2-methyl-5-(diphosphooxymethyl)pyrimidine + H(+) = thiamine phosphate + diphosphate. It carries out the reaction 4-amino-5-hydroxymethyl-2-methylpyrimidine + ATP = 4-amino-2-methyl-5-(phosphooxymethyl)pyrimidine + ADP + H(+). It catalyses the reaction 4-amino-2-methyl-5-(phosphooxymethyl)pyrimidine + ATP = 4-amino-2-methyl-5-(diphosphooxymethyl)pyrimidine + ADP. Its pathway is cofactor biosynthesis; thiamine diphosphate biosynthesis; 4-amino-2-methyl-5-diphosphomethylpyrimidine from 5-amino-1-(5-phospho-D-ribosyl)imidazole: step 3/3. It functions in the pathway cofactor biosynthesis; thiamine diphosphate biosynthesis; thiamine phosphate from 4-amino-2-methyl-5-diphosphomethylpyrimidine and 4-methyl-5-(2-phosphoethyl)-thiazole: step 1/1. Its function is as follows. Condenses 4-methyl-5-(beta-hydroxyethyl)thiazole monophosphate (THZ-P) and 2-methyl-4-amino-5-hydroxymethyl pyrimidine pyrophosphate (HMP-PP) to form thiamine monophosphate (TMP). Catalyzes the phosphorylation of hydroxymethylpyrimidine phosphate (HMP-P) to HMP-PP, and of HMP to HMP-P. This Geobacter sulfurreducens (strain ATCC 51573 / DSM 12127 / PCA) protein is Thiamine biosynthesis bifunctional protein ThiED (thiDE).